A 531-amino-acid chain; its full sequence is Importin subunit alpha-3 (531 aa).

In terms of domain architecture, IBB spans 1–58 (MSLRPSAKTEVRRNRYKVAVDAEEGRRRREDNLVEIRKNKREENLQKKRFTSSMAFGS). ARM repeat units follow at residues 111–153 (INEV…TSEN), 154–198 (TNVI…CRDL), 199–236 (VLSYGAMTPLLSQFNENTKLSMLRNATWTLSNFCRGKP), 237–281 (PPAF…DKIQ), 282–321 (AVIEAGVVPRLIQLLGHSSPSVLIPALRTIGNIVTGDDLQ), 322–364 (TQMV…NADQ), 365–405 (IQAV…GGTH), and 406–447 (DQIK…VVGE). Residues 500-524 (DNEEEGNDENHAPQSGFQFGSTNVP) form a disordered region. The segment covering 511–524 (APQSGFQFGSTNVP) has biased composition (polar residues).

This sequence belongs to the importin alpha family. In terms of assembly, forms a complex with importin subunit beta-1. Interacts with PRL1. Interacts with A.tumefaciens VirD2 and VirE2.

It localises to the nucleus. In terms of biological role, binds to conventional NLS motifs and mediates nuclear protein import across the nuclear envelope. Acts as a cellular receptor for the nuclear import of the virD2 protein of Agrobacterium, but is not essential for Agrobacterium-mediated root transformation. May be involved in the regulation of pathogen-induced salicylic acid accumulation. The sequence is that of Importin subunit alpha-3 from Arabidopsis thaliana (Mouse-ear cress).